A 429-amino-acid chain; its full sequence is MSAIVDVIAREILDSRGNPTVEADVLLESGVMGRAAVPSGASTGSREAIELRDGDAARFLGKGVLRAVENVNTEISEAIIGLDAEEQAFIDRTLIDLDGTENKSRLGANATLAVSMAVARAAAEEAGLPLYRYFGGSGPMAMPVPMMNVINGGEHANNSLDIQECMIMPVSMGSFREALRCGAEIFHHLKKITDKKGYPTTVGDEGGFAPNVSGTEEALNLIQEAIAAAGYEPGRDVLLALDCAASEFYKDGKYELKGEGLSLTSEGFTDYLATLADKFPIVSIEDGMAEGDWAGWKHLTDRLGRKIQLVGDDLFVTNTKILEQGIDQGVANSILIKINQIGTLSETFAAVEMAKRAGYTAVISHRSGETEDSTIADIAVGLNAMQIKTGSLSRSDRIAKYNQLLRIEEDLGNTVVYPGKRAFYNLRSR.

Residue Q163 participates in (2R)-2-phosphoglycerate binding. Catalysis depends on E205, which acts as the Proton donor. Mg(2+) is bound by residues D242, E285, and D312. The (2R)-2-phosphoglycerate site is built by K337, R366, S367, and K388. K337 functions as the Proton acceptor in the catalytic mechanism.

This sequence belongs to the enolase family. It depends on Mg(2+) as a cofactor.

Its subcellular location is the cytoplasm. The protein localises to the secreted. It localises to the cell surface. It carries out the reaction (2R)-2-phosphoglycerate = phosphoenolpyruvate + H2O. It functions in the pathway carbohydrate degradation; glycolysis; pyruvate from D-glyceraldehyde 3-phosphate: step 4/5. Catalyzes the reversible conversion of 2-phosphoglycerate (2-PG) into phosphoenolpyruvate (PEP). It is essential for the degradation of carbohydrates via glycolysis. The chain is Enolase from Azoarcus sp. (strain BH72).